Reading from the N-terminus, the 246-residue chain is Ureidoacrylate amidohydrolase RutB (246 aa).

The segment at 1 to 27 (MSAVTAAGYQAPQERSQSVTLPARPEP) is disordered. Catalysis depends on D41, which acts as the Proton acceptor. Residue K150 is part of the active site. C183 (nucleophile) is an active-site residue.

The protein belongs to the isochorismatase family. RutB subfamily.

The catalysed reaction is (Z)-3-ureidoacrylate + H2O + H(+) = (Z)-3-aminoacrylate + NH4(+) + CO2. The enzyme catalyses (Z)-3-ureidoacrylate + H2O = (Z)-3-aminoacrylate + carbamate + H(+). It carries out the reaction (Z)-2-methylureidoacrylate + H2O + H(+) = (Z)-2-methylaminoacrylate + NH4(+) + CO2. In terms of biological role, hydrolyzes ureidoacrylate to form aminoacrylate and carbamate. The carbamate hydrolyzes spontaneously, thereby releasing one of the nitrogen atoms of the pyrimidine ring as ammonia and one of its carbon atoms as CO2. In Rhizobium rhizogenes (strain K84 / ATCC BAA-868) (Agrobacterium radiobacter), this protein is Ureidoacrylate amidohydrolase RutB.